We begin with the raw amino-acid sequence, 33 residues long: Lysozyme C, spleen isozyme (33 aa).

It belongs to the glycosyl hydrolase 22 family. Monomer.

It catalyses the reaction Hydrolysis of (1-&gt;4)-beta-linkages between N-acetylmuramic acid and N-acetyl-D-glucosamine residues in a peptidoglycan and between N-acetyl-D-glucosamine residues in chitodextrins.. In terms of biological role, lysozymes have primarily a bacteriolytic function; those in tissues and body fluids are associated with the monocyte-macrophage system and enhance the activity of immunoagents. The sequence is that of Lysozyme C, spleen isozyme from Equus caballus (Horse).